The primary structure comprises 340 residues: Cathepsin B (340 aa).

The first 17 residues, 1-17, serve as a signal peptide directing secretion; that stretch reads MSWSRSILCLLGAFANA. Positions 18-79 are cleaved as a propeptide — activation peptide; it reads RSIPYYPPLS…ERVDFAEDMD (62 aa). Asn-38 is a glycosylation site (N-linked (GlcNAc...) asparagine). Intrachain disulfides connect Cys-93–Cys-122, Cys-105–Cys-150, Cys-141–Cys-208, Cys-142–Cys-146, Cys-179–Cys-212, and Cys-187–Cys-198. The active site involves Cys-108. Asn-192 is a glycosylation site (N-linked (GlcNAc...) asparagine). Active-site residues include His-279 and Asn-299.

It belongs to the peptidase C1 family. In terms of assembly, dimer of a heavy chain and a light chain cross-linked by a disulfide bond.

Its subcellular location is the lysosome. It carries out the reaction Hydrolysis of proteins with broad specificity for peptide bonds. Preferentially cleaves -Arg-Arg-|-Xaa bonds in small molecule substrates (thus differing from cathepsin L). In addition to being an endopeptidase, shows peptidyl-dipeptidase activity, liberating C-terminal dipeptides.. Thiol protease which is believed to participate in intracellular degradation and turnover of proteins. Has also been implicated in tumor invasion and metastasis. This is Cathepsin B (CTSB) from Gallus gallus (Chicken).